A 251-amino-acid polypeptide reads, in one-letter code: Ubiquinone/menaquinone biosynthesis C-methyltransferase UbiE (251 aa).

Residues Thr74, Asp95, 123-124, and Ser140 each bind S-adenosyl-L-methionine; that span reads NA.

This sequence belongs to the class I-like SAM-binding methyltransferase superfamily. MenG/UbiE family.

The enzyme catalyses a 2-demethylmenaquinol + S-adenosyl-L-methionine = a menaquinol + S-adenosyl-L-homocysteine + H(+). It carries out the reaction a 2-methoxy-6-(all-trans-polyprenyl)benzene-1,4-diol + S-adenosyl-L-methionine = a 5-methoxy-2-methyl-3-(all-trans-polyprenyl)benzene-1,4-diol + S-adenosyl-L-homocysteine + H(+). It functions in the pathway quinol/quinone metabolism; menaquinone biosynthesis; menaquinol from 1,4-dihydroxy-2-naphthoate: step 2/2. Its pathway is cofactor biosynthesis; ubiquinone biosynthesis. Functionally, methyltransferase required for the conversion of demethylmenaquinol (DMKH2) to menaquinol (MKH2) and the conversion of 2-polyprenyl-6-methoxy-1,4-benzoquinol (DDMQH2) to 2-polyprenyl-3-methyl-6-methoxy-1,4-benzoquinol (DMQH2). This chain is Ubiquinone/menaquinone biosynthesis C-methyltransferase UbiE, found in Pectobacterium carotovorum subsp. carotovorum (strain PC1).